A 309-amino-acid polypeptide reads, in one-letter code: Homoserine O-acetyltransferase (309 aa).

The Acyl-thioester intermediate role is filled by Cys142. The substrate site is built by Lys163 and Ser192. The active-site Proton acceptor is the His235. Glu237 is an active-site residue. Arg249 lines the substrate pocket.

It belongs to the MetA family.

The protein resides in the cytoplasm. It carries out the reaction L-homoserine + acetyl-CoA = O-acetyl-L-homoserine + CoA. The protein operates within amino-acid biosynthesis; L-methionine biosynthesis via de novo pathway; O-acetyl-L-homoserine from L-homoserine: step 1/1. In terms of biological role, transfers an acetyl group from acetyl-CoA to L-homoserine, forming acetyl-L-homoserine. This Allorhizobium ampelinum (strain ATCC BAA-846 / DSM 112012 / S4) (Agrobacterium vitis (strain S4)) protein is Homoserine O-acetyltransferase.